The sequence spans 706 residues: Double-strand break repair protein MRE11 (706 aa).

Residue Ser-2 is modified to N-acetylserine. A Phosphoserine modification is found at Ser-2. Mn(2+) contacts are provided by Asp-20, His-22, and Asp-60. Residues 87-117 (RPVQFEVISDQSVNFGFSKFPWVNYQDGNLN) are interaction with NBN. Position 128 (Asn-128) interacts with Mn(2+). The active-site Proton donor is His-129. The Mn(2+) site is built by His-217, His-245, and His-247. Residue Lys-255 forms a Glycyl lysine isopeptide (Lys-Gly) (interchain with G-Cter in SUMO2) linkage. Ser-275 bears the Phosphoserine mark. Residue Lys-282 forms a Glycyl lysine isopeptide (Lys-Gly) (interchain with G-Cter in UFM1) linkage. Lys-339 is covalently cross-linked (Glycyl lysine isopeptide (Lys-Gly) (interchain with G-Cter in ubiquitin)). Glycyl lysine isopeptide (Lys-Gly) (interchain with G-Cter in SUMO) cross-links involve residues Lys-384 and Lys-468. Lys-481 participates in a covalent cross-link: Glycyl lysine isopeptide (Lys-Gly) (interchain with G-Cter in ubiquitin). Positions 505 to 514 (FRESRQRNTN) are enriched in basic and acidic residues. The interval 505–706 (FRESRQRNTN…SSSCPRRNRR (202 aa)) is disordered. Over residues 531–541 (RSQSETSTSAF) the composition is skewed to polar residues. The span at 569–579 (GRGRGRGRRGA) shows a compositional bias: basic residues. Asymmetric dimethylarginine is present on residues Arg-570, Arg-572, Arg-574, Arg-576, Arg-577, Arg-580, Arg-587, Arg-592, and Arg-594. The short motif at 570–594 (RGRGRGRRGARGQSSAPRGGSQRGR) is the GAR element. Residues 580 to 589 (RGQSSAPRGG) show a composition bias toward low complexity. Residues 603 to 617 (RGRSSKATSSTSRNM) are compositionally biased toward polar residues. Phosphoserine is present on residues Ser-618, Ser-640, and Ser-648. The span at 643 to 653 (IEVDDSDEDDI) shows a compositional bias: acidic residues. Residues 655-679 (PTNSRADQRWSGTTSSKRMSQSQTA) are compositionally biased toward polar residues. Lys-671 bears the N6-lactoyllysine mark. Phosphoserine occurs at positions 674, 676, 686, and 699. A compositionally biased stretch (acidic residues) spans 684–694 (FESDEDDDDDP).

This sequence belongs to the MRE11/RAD32 family. In terms of assembly, component of the MRN complex composed of two heterodimers RAD50 and MRE11 associated with a single NBN. The MRN complexes dimerize on DNA to form joined MRN-MRN oligomers required for DNA double-strand break repair. As part of the MRN complex, interacts with MCM9; the interaction recruits the complex to DNA repair sites. Component of the BASC complex, at least composed of BRCA1, MSH2, MSH6, MLH1, ATM, BLM, RAD50, MRE11 and NBN. Found in a complex with TERF2. Interacts with DCLRE1C/Artemis and DCLRE1B/Apollo. Interacts with ATF2. Interacts with EXD2. Interacts with MRNIP. Interacts with SAMHD1; leading to stimulate 3'-5' exonuclease activity. Interacts (when ubiquitinated) with UBQLN4 (via its UBA domain). Interacts with CYREN (via XLF motif). Interacts with GFI1; promoting methylation by PRMT1. Interacts with DYNLL1; inhibiting the activity of MRE11. Interacts with C1QBP and RAD50; interaction takes place in absence of DNA damage to form the MRC (MRE11-RAD50-C1QBP) complex that inhibits the activity of MRE11. Interacts with AGER/RAGE; AGER is recruited to DNA double-strand break sites where it enhances MRE11 endonuclease activity to promote DNA repair. The cofactor is Mn(2+). Post-translationally, phosphorylated by ATM at Ser-674 and Ser-676 in response to DNA damage, promoting MRE11 activity: phosphorylation activates MRE11 by preventing the interaction between MRE11 and the C1QBP inhibitor. Phosphorylation at Ser-648 by PLK1 primes for phosphorylation at Ser-686 by CK2, inhibiting recruitment of the MRN complex to DNA damage sites. Asymmetric dimethylation by PRMT1 promotes MRE11 exonuclease activity. In terms of processing, lactylation at Lys-671 by CREBBP/CBP in response to DNA damage promotes DNA binding and MRE11 activity. Post-translationally, acetylated on lysine residues by KAT2A /GCN5. Ubiquitinated following DNA damage. Ubiquitination triggers interaction with UBQLN4, leading to MRE11 removal from chromatin and degradation by the proteasome. Ubiquitinated at Lys-339 and Lys-481 by RNF126 via 'Lys-27'- and 'Lys-29'-linked polyubiquitin chains, promoting the exonuclease activity of MRE11. In terms of processing, SUMOylated by PIAS1, stabilizing MRE11 on chromatin during end resection. DeSUMOylated by SENP3 following removal from DNA double-strand breaks (DSBs). Post-translationally, ufmylation at Lys-282 promotes MRE11 activity and is required for activation of the ATM and ATR kinases by the MRN complex.

The protein resides in the nucleus. Its subcellular location is the chromosome. It is found in the telomere. Interaction with SAMHD1 stimulates the double-strand-specific 3'-5' exonuclease activity. RBBP8/CtIP specifically promotes the endonuclease activity to clear protein-DNA adducts and generate clean double-strand break ends. DYNLL1-binding inhibits the activity of MRE11. MRE11 activity is inhibited by C1QBP: in absence of DNA damage, C1QBP interacts with unphosphorylated MRE11, preventing formation and activity of the MRN complex. Its function is as follows. Core component of the MRN complex, which plays a central role in double-strand break (DSB) repair, DNA recombination, maintenance of telomere integrity and meiosis. The MRN complex is involved in the repair of DNA double-strand breaks (DSBs) via homologous recombination (HR), an error-free mechanism which primarily occurs during S and G2 phases. The complex (1) mediates the end resection of damaged DNA, which generates proper single-stranded DNA, a key initial steps in HR, and is (2) required for the recruitment of other repair factors and efficient activation of ATM and ATR upon DNA damage. Within the MRN complex, MRE11 possesses both single-strand endonuclease activity and double-strand-specific 3'-5' exonuclease activity. After DSBs, MRE11 is loaded onto DSBs sites and cleaves DNA by cooperating with RBBP8/CtIP to initiate end resection. MRE11 first endonucleolytically cleaves the 5' strand at DNA DSB ends to prevent non-homologous end joining (NHEJ) and licence HR. It then generates a single-stranded DNA gap via 3' to 5' exonucleolytic degradation to create entry sites for EXO1- and DNA2-mediated 5' to 3' long-range resection, which is required for single-strand invasion and recombination. RBBP8/CtIP specifically promotes the endonuclease activity of MRE11 to clear protein-DNA adducts and generate clean double-strand break ends. MRE11 endonuclease activity is also enhanced by AGER/RAGE. The MRN complex is also required for DNA damage signaling via activation of the ATM and ATR kinases: the nuclease activity of MRE11 is not required to activate ATM and ATR. The MRN complex is also required for the processing of R-loops. The MRN complex is involved in the activation of the cGAS-STING pathway induced by DNA damage during tumorigenesis: the MRN complex acts by displacing CGAS from nucleosome sequestration, thereby activating it. In telomeres the MRN complex may modulate t-loop formation. The polypeptide is Double-strand break repair protein MRE11 (Mus musculus (Mouse)).